A 212-amino-acid chain; its full sequence is Dihydrophenazinedicarboxylate synthase (212 aa).

Ser8 contributes to the substrate binding site. FMN is bound by residues 63-66 and 78-79; these read RVIA and CT. His80 is a binding site for substrate. FMN contacts are provided by residues 84–85 and Gln107; that span reads RK. Substrate is bound by residues Arg129 and Ser137. Residues 142–143 and Arg195 contribute to the FMN site; that span reads QS.

It belongs to the pyridoxamine 5'-phosphate oxidase family. The cofactor is FMN.

The enzyme catalyses (1R,6R)-1,4,5,5a,6,9-hexahydrophenazine-1,6-dicarboxylate + O2 = (1R,10aS)-1,4,10,10a-tetrahydrophenazine-1,6-dicarboxylate + H2O2. The catalysed reaction is (1R,10aS)-1,4,10,10a-tetrahydrophenazine-1,6-dicarboxylate + O2 = (5aS)-5,5a-dihydrophenazine-1,6-dicarboxylate + H2O2. It carries out the reaction (1R,10aS)-1,4,10,10a-tetrahydrophenazine-1-carboxylate + O2 = (10aS)-10,10a-dihydrophenazine-1-carboxylate + H2O2. It catalyses the reaction (1R)-1,4,5,10-tetrahydrophenazine-1-carboxylate + O2 = (10aS)-10,10a-dihydrophenazine-1-carboxylate + H2O2. It functions in the pathway antibiotic biosynthesis; phenazine biosynthesis. Involved in the biosynthesis of the antibiotic phenazine, a nitrogen-containing heterocyclic molecule having important roles in virulence, competition and biological control. Catalyzes several oxidations in the terminal steps of core phenazine biosynthesis. It oxidizes both hexahydrophenazine-1,6-dicarboxylic acid (HHPDC) and tetrahydrophenazine-1-carboxylic acid (THPCA) and thereby contributes to the generation of both phenazine-1,6-dicarboxylic acid (PDC) and phenazine-1-carboxylic acid (PCA). It synthesizes phenazines in their reduced form, which are the likely end products in vivo. The chain is Dihydrophenazinedicarboxylate synthase from Burkholderia lata (strain ATCC 17760 / DSM 23089 / LMG 22485 / NCIMB 9086 / R18194 / 383).